The following is a 118-amino-acid chain: MARIAGVNIPDNKHTVISLTYIYGVGRTTAQAICAATGVNPAAKIKDLSDEQIEQLRGEVAKLTTEGDLRREVNMKIKRLMDLGCYRGLRHRRGLPVRGQRTKTNARTRKGPRKPIRK.

Residues 93–118 (RGLPVRGQRTKTNARTRKGPRKPIRK) are disordered.

It belongs to the universal ribosomal protein uS13 family. Part of the 30S ribosomal subunit. Forms a loose heterodimer with protein S19. Forms two bridges to the 50S subunit in the 70S ribosome.

Its function is as follows. Located at the top of the head of the 30S subunit, it contacts several helices of the 16S rRNA. In the 70S ribosome it contacts the 23S rRNA (bridge B1a) and protein L5 of the 50S subunit (bridge B1b), connecting the 2 subunits; these bridges are implicated in subunit movement. Contacts the tRNAs in the A and P-sites. The protein is Small ribosomal subunit protein uS13 of Azotobacter vinelandii (strain DJ / ATCC BAA-1303).